The chain runs to 451 residues: UDP-N-acetylmuramoylalanine--D-glutamate ligase (451 aa).

116–122 (GTNGKTT) provides a ligand contact to ATP.

The protein belongs to the MurCDEF family.

It localises to the cytoplasm. It catalyses the reaction UDP-N-acetyl-alpha-D-muramoyl-L-alanine + D-glutamate + ATP = UDP-N-acetyl-alpha-D-muramoyl-L-alanyl-D-glutamate + ADP + phosphate + H(+). The protein operates within cell wall biogenesis; peptidoglycan biosynthesis. Cell wall formation. Catalyzes the addition of glutamate to the nucleotide precursor UDP-N-acetylmuramoyl-L-alanine (UMA). In Clostridioides difficile (strain 630) (Peptoclostridium difficile), this protein is UDP-N-acetylmuramoylalanine--D-glutamate ligase.